Here is a 312-residue protein sequence, read N- to C-terminus: MMEPREAGQHVGAANGAQEDVAFNLIILSLTEGLGLGGLLGNGAVLWLLSSNVYRNPFAIYLLDVACADLIFLGCHMVAIVPDLLQGRLDFPGFVQTSLATLRFFCYIVGLSLLAAVSVEQCLAALFPAWYSCRRPRHLTTCVCALTWALCLLLHLLLSGACTQFFGEPSRHLCRTLWLVAAVLLALLCCTMCGASLMLLLRVERGPQRPPPRGFPGLILLTVLLFLFCGLPFGIYWLSRNLLWYIPHYFYHFSFLMAAVHCAAKPVVYFCLGSAQGRRLPLRLVLQRALGDEAELGAVRETSRRGLVDIAA.

Topologically, residues 1–20 (MMEPREAGQHVGAANGAQED) are extracellular. The helical transmembrane segment at 21 to 41 (VAFNLIILSLTEGLGLGGLLG) threads the bilayer. Residues 42–59 (NGAVLWLLSSNVYRNPFA) are Cytoplasmic-facing. Residues 60–80 (IYLLDVACADLIFLGCHMVAI) form a helical membrane-spanning segment. Residues 81–106 (VPDLLQGRLDFPGFVQTSLATLRFFC) lie on the Extracellular side of the membrane. A helical membrane pass occupies residues 107–127 (YIVGLSLLAAVSVEQCLAALF). Residues 128–141 (PAWYSCRRPRHLTT) are Cytoplasmic-facing. The helical transmembrane segment at 142–162 (CVCALTWALCLLLHLLLSGAC) threads the bilayer. The Extracellular segment spans residues 163 to 176 (TQFFGEPSRHLCRT). Residues 177 to 197 (LWLVAAVLLALLCCTMCGASL) traverse the membrane as a helical segment. The Cytoplasmic segment spans residues 198 to 217 (MLLLRVERGPQRPPPRGFPG). The chain crosses the membrane as a helical span at residues 218-238 (LILLTVLLFLFCGLPFGIYWL). Residues 239–241 (SRN) lie on the Extracellular side of the membrane. The chain crosses the membrane as a helical span at residues 242–262 (LLWYIPHYFYHFSFLMAAVHC). At 263–312 (AAKPVVYFCLGSAQGRRLPLRLVLQRALGDEAELGAVRETSRRGLVDIAA) the chain is on the cytoplasmic side.

The protein belongs to the G-protein coupled receptor 1 family. Mas subfamily.

It localises to the cell membrane. Its function is as follows. Orphan receptor. May regulate nociceptor function and/or development, including the sensation or modulation of pain. This chain is Mas-related G-protein coupled receptor member E (MRGPRE), found in Homo sapiens (Human).